A 444-amino-acid polypeptide reads, in one-letter code: Mitogen-activated protein kinase mpk-1 (444 aa).

Composition is skewed to polar residues over residues Met1 to Asn17 and Gly24 to Gln56. The segment at Met1 to Gln56 is disordered. Residues Tyr96–Leu384 enclose the Protein kinase domain. Residues Ile102 to Val110 and Lys125 contribute to the ATP site. Catalysis depends on Asp220, which acts as the Proton acceptor. Residue Thr256 is modified to Phosphothreonine. The TXY motif lies at Thr256–Tyr258. Phosphotyrosine is present on Tyr258.

Belongs to the protein kinase superfamily. CMGC Ser/Thr protein kinase family. MAP kinase subfamily. Isoform a interacts with gck-1 (via N-terminus). Mg(2+) is required as a cofactor. Isoform a is phosphorylated at the pachytene stage during oogenesis and is negatively regulated by gck-1. Isoform b is phosphorylated in proximal oocytes. In terms of tissue distribution, expressed in cells lining the rectum. Isoform a is expressed in nervous system, body wall muscles and posterior intestine. Isoform b expression may be restricted to germline.

It carries out the reaction L-seryl-[protein] + ATP = O-phospho-L-seryl-[protein] + ADP + H(+). It catalyses the reaction L-threonyl-[protein] + ATP = O-phospho-L-threonyl-[protein] + ADP + H(+). Activated by dual phosphorylation at Thr-256 and Tyr-258. May be inactivated by lip-1-mediated dephosphorylation. Functions in let-60 Ras signaling pathway; acts downstream of lin-45 raf kinase, but before the lin-1 gene product in controlling vulval cell differentiation. Plays a negative role in proximal germline proliferation in the mitotic zone. Required for progression of developing oocytes through the pachytene stage, perhaps acting after efl-1/dpl-1-mediated gene activation and before gld-1 down-regulation. May play a role in global X chromosome reactivation or be indirectly required for progression of germ cells through meiosis to the point where X reactivation occurs. In oocytes, inhibits the activity of the chloride channel clh-3, likely by activating gck-3. Plays a role in response to M.nematophilum-mediated bacterial infection by promoting tail swelling and preventing constipation. Involved in fluid homeostasis. In addition, involved in the up-regulation of lysozyme ilys-3 expression in the intestine in responses to M.nematophilum-mediated bacterial infection. By phosphorylating transcription factor skn-1 (isoform c) may play a role in increasing life span downstream of lin-45, let-60 and mek-2. By up-regulating cep-1 and down-regulating gld-1 expression in the late pachytene stage, plays a role in germline apoptosis in response to DNA damage. Regulates egl-1 expression in response to DNA damage, probably upstream of cep-1. In terms of biological role, suppresses germline tumor formation by preventing the dedifferentiation of secondary spermatocytes probably upstream of rskn-1. The polypeptide is Mitogen-activated protein kinase mpk-1 (mpk-1) (Caenorhabditis elegans).